The following is a 100-amino-acid chain: Putative exopolysaccharide production repressor protein y4xQ (100 aa).

The next 2 membrane-spanning stretches (helical) occupy residues 9–29 and 35–55; these read ILWL…GSIS and TMVG…FLLW. Positions 66–100 are disordered; it reads TTGQFHGEEQPGDPRIAGTHGRTDGDPCFEDEDSR.

The protein to Rhizobium exopolysaccharide production repressor protein (ExoX).

The protein localises to the cell membrane. Functionally, could be involved in the inhibition of exopolysaccharide synthesis (EPS) and nodulation ability (nod). The sequence is that of Putative exopolysaccharide production repressor protein y4xQ from Sinorhizobium fredii (strain NBRC 101917 / NGR234).